Consider the following 272-residue polypeptide: Shikimate dehydrogenase (NADP(+)) (272 aa).

Shikimate-binding positions include 14–16 (SKS) and Thr-61. Lys-65 (proton acceptor) is an active-site residue. Glu-77 lines the NADP(+) pocket. 2 residues coordinate shikimate: Asn-86 and Asp-102. NADP(+) is bound by residues 126–130 (GAGGA), 149–154 (NRTVSR), and Met-213. Tyr-215 serves as a coordination point for shikimate. Gly-237 is an NADP(+) binding site.

This sequence belongs to the shikimate dehydrogenase family. Homodimer.

It carries out the reaction shikimate + NADP(+) = 3-dehydroshikimate + NADPH + H(+). It functions in the pathway metabolic intermediate biosynthesis; chorismate biosynthesis; chorismate from D-erythrose 4-phosphate and phosphoenolpyruvate: step 4/7. Involved in the biosynthesis of the chorismate, which leads to the biosynthesis of aromatic amino acids. Catalyzes the reversible NADPH linked reduction of 3-dehydroshikimate (DHSA) to yield shikimate (SA). This Escherichia coli O6:K15:H31 (strain 536 / UPEC) protein is Shikimate dehydrogenase (NADP(+)).